The primary structure comprises 206 residues: Ribonuclease M5 (206 aa).

A Toprim domain is found at 8 to 91 (NEVIVVEGRD…AFLNRDEARP (84 aa)). The Mg(2+) site is built by glutamate 14, aspartate 60, and aspartate 62.

This sequence belongs to the ribonuclease M5 family. The cofactor is Mg(2+).

The protein localises to the cytoplasm. The enzyme catalyses Endonucleolytic cleavage of RNA, removing 21 and 42 nucleotides, respectively, from the 5'- and 3'-termini of a 5S-rRNA precursor.. In terms of biological role, required for correct processing of both the 5' and 3' ends of 5S rRNA precursor. Cleaves both sides of a double-stranded region yielding mature 5S rRNA in one step. The polypeptide is Ribonuclease M5 (Lactococcus lactis subsp. lactis (strain IL1403) (Streptococcus lactis)).